We begin with the raw amino-acid sequence, 1113 residues long: uncharacterized protein (1113 aa).

313-320 (GPPGTGKS) is an ATP binding site.

Belongs to the DNA2/NAM7 helicase family.

This is an uncharacterized protein from Mycoplasma genitalium (strain ATCC 33530 / DSM 19775 / NCTC 10195 / G37) (Mycoplasmoides genitalium).